Here is a 70-residue protein sequence, read N- to C-terminus: Large ribosomal subunit protein uL29 (70 aa).

It belongs to the universal ribosomal protein uL29 family.

The protein is Large ribosomal subunit protein uL29 of Rickettsia bellii (strain OSU 85-389).